The sequence spans 146 residues: 3-hydroxyacyl-[acyl-carrier-protein] dehydratase FabZ (146 aa).

Histidine 48 is an active-site residue.

This sequence belongs to the thioester dehydratase family. FabZ subfamily.

It localises to the cytoplasm. The enzyme catalyses a (3R)-hydroxyacyl-[ACP] = a (2E)-enoyl-[ACP] + H2O. Functionally, involved in unsaturated fatty acids biosynthesis. Catalyzes the dehydration of short chain beta-hydroxyacyl-ACPs and long chain saturated and unsaturated beta-hydroxyacyl-ACPs. This Campylobacter lari (strain RM2100 / D67 / ATCC BAA-1060) protein is 3-hydroxyacyl-[acyl-carrier-protein] dehydratase FabZ.